A 462-amino-acid chain; its full sequence is C4-dicarboxylate transport transcriptional regulatory protein DctD (462 aa).

The 115-residue stretch at 12–126 (QVLLIDDDPH…ALLDSVRRAL (115 aa)) folds into the Response regulatory domain. D61 is modified (4-aspartylphosphate). The Sigma-54 factor interaction domain maps to 152–381 (LIGRSAGMQR…LQNAAERFAL (230 aa)). ATP is bound by residues 180–187 (GETGAGKE) and 243–252 (ANGGTLFLDE).

Post-translationally, phosphorylated by DctB.

Functionally, member of the two-component regulatory system DctB/DctD, which regulates C4-dicarboxylate transport via regulation of expression of the dctPQM operon and dctA. In Pseudomonas aeruginosa (strain ATCC 15692 / DSM 22644 / CIP 104116 / JCM 14847 / LMG 12228 / 1C / PRS 101 / PAO1), this protein is C4-dicarboxylate transport transcriptional regulatory protein DctD.